Reading from the N-terminus, the 618-residue chain is Proline--tRNA ligase (618 aa).

The protein belongs to the class-II aminoacyl-tRNA synthetase family. ProS type 1 subfamily. Homodimer.

The protein resides in the cytoplasm. The catalysed reaction is tRNA(Pro) + L-proline + ATP = L-prolyl-tRNA(Pro) + AMP + diphosphate. In terms of biological role, catalyzes the attachment of proline to tRNA(Pro) in a two-step reaction: proline is first activated by ATP to form Pro-AMP and then transferred to the acceptor end of tRNA(Pro). As ProRS can inadvertently accommodate and process non-cognate amino acids such as alanine and cysteine, to avoid such errors it has two additional distinct editing activities against alanine. One activity is designated as 'pretransfer' editing and involves the tRNA(Pro)-independent hydrolysis of activated Ala-AMP. The other activity is designated 'posttransfer' editing and involves deacylation of mischarged Ala-tRNA(Pro). The misacylated Cys-tRNA(Pro) is not edited by ProRS. This chain is Proline--tRNA ligase, found in Streptococcus pyogenes serotype M12 (strain MGAS2096).